Consider the following 469-residue polypeptide: MEARVEQFIENNRLFGMETNVLVAVSGGPDSMALLAIMANLREKWKLNLFGVHVNHRLRGEESNKDAELVQSFSARLGVPCNVKDVDVAAFKAEHHVGTQQAARALRYQVFQGEMERVHATVLLTAHHGDDEVETAFMKLTRGTTPLTKLGIAATRPFANGVLARPLLEETKRSIVAYCHEKAIPYRIDQSNFSDAYTRNRFRMNMAPYLVEENPHIHKHIGRFDRWQEEDNHYLMEQAKAHLDQILTKKSEKSIELEIQALCLAPFPLQRRMIHLILNYLHLNVYGVNDMRVFPDAIEQIQAFLQTSAPSAQLDLPGRVQVKRSYGTCLFTTAPFIETKAYCHLLSIPGKVDTPLGVIRADTREELLELEHTDAVSFQVSQVAFPLYIRNRKPGDKLSPSGMSGSKKVNRLFIDRKVDRAKRDAWPLLVDANDSILWVPSLQTSRILTRSANVQGELLHVTFSQHKWP.

26–31 (SGGPDS) serves as a coordination point for ATP.

Belongs to the tRNA(Ile)-lysidine synthase family.

It localises to the cytoplasm. The catalysed reaction is cytidine(34) in tRNA(Ile2) + L-lysine + ATP = lysidine(34) in tRNA(Ile2) + AMP + diphosphate + H(+). Its function is as follows. Ligates lysine onto the cytidine present at position 34 of the AUA codon-specific tRNA(Ile) that contains the anticodon CAU, in an ATP-dependent manner. Cytidine is converted to lysidine, thus changing the amino acid specificity of the tRNA from methionine to isoleucine. The chain is tRNA(Ile)-lysidine synthase from Shouchella clausii (strain KSM-K16) (Alkalihalobacillus clausii).